Reading from the N-terminus, the 155-residue chain is Small ribosomal subunit protein bS6 (155 aa).

Over residues 115–137 (EADAAKAEADAARVEAEAKKAET) the composition is skewed to basic and acidic residues. The interval 115–155 (EADAAKAEADAARVEAEAKKAETDETDETVDAETPENEEEN) is disordered. The segment covering 138–155 (DETDETVDAETPENEEEN) has biased composition (acidic residues).

It belongs to the bacterial ribosomal protein bS6 family.

Binds together with bS18 to 16S ribosomal RNA. This chain is Small ribosomal subunit protein bS6, found in Desulforapulum autotrophicum (strain ATCC 43914 / DSM 3382 / VKM B-1955 / HRM2) (Desulfobacterium autotrophicum).